The following is a 275-amino-acid chain: Bis(5'-nucleosyl)-tetraphosphatase, symmetrical (275 aa).

Belongs to the Ap4A hydrolase family.

It carries out the reaction P(1),P(4)-bis(5'-adenosyl) tetraphosphate + H2O = 2 ADP + 2 H(+). Functionally, hydrolyzes diadenosine 5',5'''-P1,P4-tetraphosphate to yield ADP. This is Bis(5'-nucleosyl)-tetraphosphatase, symmetrical from Hamiltonella defensa subsp. Acyrthosiphon pisum (strain 5AT).